A 78-amino-acid chain; its full sequence is Acyl carrier protein (78 aa).

In terms of domain architecture, Carrier spans 2–77 (SSIEERVKKI…LAINYINENL (76 aa)). Ser37 bears the O-(pantetheine 4'-phosphoryl)serine mark.

The protein belongs to the acyl carrier protein (ACP) family. 4'-phosphopantetheine is transferred from CoA to a specific serine of apo-ACP by AcpS. This modification is essential for activity because fatty acids are bound in thioester linkage to the sulfhydryl of the prosthetic group.

It is found in the cytoplasm. It participates in lipid metabolism; fatty acid biosynthesis. Functionally, carrier of the growing fatty acid chain in fatty acid biosynthesis. This is Acyl carrier protein from Saccharophagus degradans (strain 2-40 / ATCC 43961 / DSM 17024).